Here is a 387-residue protein sequence, read N- to C-terminus: Probable serine/threonine-protein kinase PBL18 (387 aa).

Positions 1–37 (MGNCLDSSARVGNRESTFGGSSRISRKPNQSSRLSSL) are disordered. Gly-2 carries the N-myristoyl glycine lipid modification. Cys-4 carries the S-palmitoyl cysteine lipid modification. Positions 14–37 (RESTFGGSSRISRKPNQSSRLSSL) are enriched in polar residues. Position 73 is a phosphothreonine (Thr-73). Residues 84 to 365 (FKPNSMIGEG…ADVLSTLQQL (282 aa)) form the Protein kinase domain. Residues 90 to 98 (IGEGGFGCV) and Lys-122 each bind ATP. Tyr-167 carries the post-translational modification Phosphotyrosine. The active-site Proton acceptor is Asp-215. Ser-219 is modified (phosphoserine). Residues Thr-250 and Thr-255 each carry the phosphothreonine modification. Position 263 is a phosphotyrosine (Tyr-263). Residues 368–387 (SSKKMGSTQNIVMSPSSHMS) form a disordered region.

Belongs to the protein kinase superfamily. Ser/Thr protein kinase family.

Its subcellular location is the cell membrane. The enzyme catalyses L-seryl-[protein] + ATP = O-phospho-L-seryl-[protein] + ADP + H(+). The catalysed reaction is L-threonyl-[protein] + ATP = O-phospho-L-threonyl-[protein] + ADP + H(+). Functionally, may be involved in plant defense signaling. The sequence is that of Probable serine/threonine-protein kinase PBL18 from Arabidopsis thaliana (Mouse-ear cress).